The chain runs to 576 residues: Arginine--tRNA ligase (576 aa).

The short motif at 126–136 is the 'HIGH' region element; that stretch reads ANPTGPMHIGH.

It belongs to the class-I aminoacyl-tRNA synthetase family. Monomer.

The protein localises to the cytoplasm. It catalyses the reaction tRNA(Arg) + L-arginine + ATP = L-arginyl-tRNA(Arg) + AMP + diphosphate. The protein is Arginine--tRNA ligase of Rickettsia canadensis (strain McKiel).